Here is a 505-residue protein sequence, read N- to C-terminus: ATP synthase subunit alpha (505 aa).

ATP is bound at residue 171–178 (GDRQTGKT).

Belongs to the ATPase alpha/beta chains family. F-type ATPases have 2 components, CF(1) - the catalytic core - and CF(0) - the membrane proton channel. CF(1) has five subunits: alpha(3), beta(3), gamma(1), delta(1), epsilon(1). CF(0) has three main subunits: a(1), b(2) and c(9-12). The alpha and beta chains form an alternating ring which encloses part of the gamma chain. CF(1) is attached to CF(0) by a central stalk formed by the gamma and epsilon chains, while a peripheral stalk is formed by the delta and b chains.

Its subcellular location is the cell inner membrane. The enzyme catalyses ATP + H2O + 4 H(+)(in) = ADP + phosphate + 5 H(+)(out). Produces ATP from ADP in the presence of a proton gradient across the membrane. The alpha chain is a regulatory subunit. In Campylobacter hominis (strain ATCC BAA-381 / DSM 21671 / CCUG 45161 / LMG 19568 / NCTC 13146 / CH001A), this protein is ATP synthase subunit alpha.